Here is a 211-residue protein sequence, read N- to C-terminus: Urease accessory protein UreG (211 aa).

Gly-8–Thr-15 provides a ligand contact to GTP.

The protein belongs to the SIMIBI class G3E GTPase family. UreG subfamily. In terms of assembly, homodimer. UreD, UreF and UreG form a complex that acts as a GTP-hydrolysis-dependent molecular chaperone, activating the urease apoprotein by helping to assemble the nickel containing metallocenter of UreC. The UreE protein probably delivers the nickel.

It localises to the cytoplasm. Functionally, facilitates the functional incorporation of the urease nickel metallocenter. This process requires GTP hydrolysis, probably effectuated by UreG. The polypeptide is Urease accessory protein UreG (Metallosphaera sedula (strain ATCC 51363 / DSM 5348 / JCM 9185 / NBRC 15509 / TH2)).